A 177-amino-acid polypeptide reads, in one-letter code: Large ribosomal subunit protein uL6 (177 aa).

The protein belongs to the universal ribosomal protein uL6 family. As to quaternary structure, part of the 50S ribosomal subunit.

Functionally, this protein binds to the 23S rRNA, and is important in its secondary structure. It is located near the subunit interface in the base of the L7/L12 stalk, and near the tRNA binding site of the peptidyltransferase center. This is Large ribosomal subunit protein uL6 from Paracidovorax citrulli (strain AAC00-1) (Acidovorax citrulli).